Reading from the N-terminus, the 346-residue chain is tRNA N6-adenosine threonylcarbamoyltransferase (346 aa).

Positions 110 and 114 each coordinate Fe cation. Substrate contacts are provided by residues 132–136 (LLSGG), Asp-165, Gly-178, and Asn-274. Asp-298 is a binding site for Fe cation.

Belongs to the KAE1 / TsaD family. Requires Fe(2+) as cofactor.

It localises to the cytoplasm. It carries out the reaction L-threonylcarbamoyladenylate + adenosine(37) in tRNA = N(6)-L-threonylcarbamoyladenosine(37) in tRNA + AMP + H(+). Required for the formation of a threonylcarbamoyl group on adenosine at position 37 (t(6)A37) in tRNAs that read codons beginning with adenine. Is involved in the transfer of the threonylcarbamoyl moiety of threonylcarbamoyl-AMP (TC-AMP) to the N6 group of A37, together with TsaE and TsaB. TsaD likely plays a direct catalytic role in this reaction. This Borreliella afzelii (strain PKo) (Borrelia afzelii) protein is tRNA N6-adenosine threonylcarbamoyltransferase.